The sequence spans 165 residues: Chorismate pyruvate-lyase (165 aa).

Met-35, Arg-77, Leu-115, and Glu-156 together coordinate substrate.

It belongs to the UbiC family. Monomer.

The protein localises to the cytoplasm. It catalyses the reaction chorismate = 4-hydroxybenzoate + pyruvate. Its pathway is cofactor biosynthesis; ubiquinone biosynthesis. Functionally, removes the pyruvyl group from chorismate, with concomitant aromatization of the ring, to provide 4-hydroxybenzoate (4HB) for the ubiquinone pathway. This Citrobacter koseri (strain ATCC BAA-895 / CDC 4225-83 / SGSC4696) protein is Chorismate pyruvate-lyase.